A 273-amino-acid polypeptide reads, in one-letter code: Coiled-coil domain-containing protein 3 (273 aa).

The first 21 residues, 1–21 (MPLPLLLAALCLAASPAPARA), serve as a signal peptide directing secretion. Asn100 carries N-linked (GlcNAc...) asparagine glycosylation. Residues 188–250 (SVQKALFEEE…VNQKLNEKLG (63 aa)) are a coiled coil.

In terms of assembly, homodimer. In terms of processing, N-glycosylated. As to expression, expressed in aorta and adipose tissue. Enriched in mature adipocytes. Over-expressed in adipose tissue from either hormonally-induced or nutritionally-regulated obese mice models.

The protein resides in the secreted. Its function is as follows. Negatively regulates TNF-alpha-induced pro-inflammatory response in endothelial cells (ECs) via inhibition of TNF-alpha-induced NF-kappaB activation in ECs. Positively regulates lipid accumulation in adipose cells. The protein is Coiled-coil domain-containing protein 3 (Ccdc3) of Mus musculus (Mouse).